Reading from the N-terminus, the 1034-residue chain is Teashirt homolog 2 (1034 aa).

The disordered stretch occupies residues 1–90 (MPRRKQQAPK…NESLLSDASD (90 aa)). Residues 13 to 38 (AGYAQEEQLKEEEEIKEEEEEEDSGS) adopt a coiled-coil conformation. Positions 21 to 36 (LKEEEEIKEEEEEEDS) are enriched in acidic residues. Residues 65 to 90 (SYQNSPGSHLSNQDAENESLLSDASD) are compositionally biased toward polar residues. A Glycyl lysine isopeptide (Lys-Gly) (interchain with G-Cter in SUMO2) cross-link involves residue lysine 188. 2 consecutive C2H2-type zinc fingers follow at residues 215–239 (FRCR…ETGH) and 275–299 (LKCM…KTKH). A disordered region spans residues 239–265 (HYQDDNRKKDKLRPTSYSKPRKRAFQD). Glycyl lysine isopeptide (Lys-Gly) (interchain with G-Cter in SUMO2) cross-links involve residues lysine 306 and lysine 315. Residues 380 to 404 (LKCMECGSSHDTLQQLTTHMMVTGH) form a C2H2-type 3; atypical zinc finger. A Glycyl lysine isopeptide (Lys-Gly) (interchain with G-Cter in SUMO2) cross-link involves residue lysine 417. Residues 432 to 455 (LSEAPNSDSLAPKPSSNSASDCTA) are compositionally biased toward polar residues. The disordered stretch occupies residues 432–496 (LSEAPNSDSL…PLQKPLDPTI (65 aa)). Residues 459 to 482 (ELKKESKKERPEETSKDEKVVKSE) show a composition bias toward basic and acidic residues. Residues lysine 461, lysine 480, lysine 497, lysine 601, and lysine 652 each participate in a glycyl lysine isopeptide (Lys-Gly) (interchain with G-Cter in SUMO2) cross-link. Disordered stretches follow at residues 598 to 676 (TQVK…TSAL) and 763 to 789 (QPID…PPQK). The segment covering 600–668 (VKKESEDKDE…KEGSEKEKPQ (69 aa)) has biased composition (basic and acidic residues). Glycyl lysine isopeptide (Lys-Gly) (interchain with G-Cter in SUMO2) cross-links involve residues lysine 800 and lysine 820. Positions 841 to 911 (RKGRQSNWNP…NVKYQLRKTG (71 aa)) form a DNA-binding region, homeobox; atypical. Residues 926–948 (FYCSDCASQFRTPSTYISHLESH) form a C2H2-type 4 zinc finger. Lysine 966 participates in a covalent cross-link: Glycyl lysine isopeptide (Lys-Gly) (interchain with G-Cter in SUMO2). Position 980 is a phosphoserine (serine 980). The C2H2-type 5 zinc-finger motif lies at 994–1017 (FKCKLCCRTFVSKHAVKLHLSKTH). Residues 1014–1034 (SKTHSKSPEHHSQFVTDVDEE) form a disordered region.

It belongs to the teashirt C2H2-type zinc-finger protein family. As to quaternary structure, interacts (via homeobox domain) with APBB1 (via PID domain 1). Sumoylated. As to expression, expressed in brain; strongly reduced in post-mortem elderly subjects with Alzheimer disease.

The protein resides in the nucleus. Probable transcriptional regulator involved in developmental processes. May act as a transcriptional repressor (Potential). This is Teashirt homolog 2 (TSHZ2) from Homo sapiens (Human).